A 236-amino-acid chain; its full sequence is 2-C-methyl-D-erythritol 4-phosphate cytidylyltransferase (236 aa).

This sequence belongs to the IspD/TarI cytidylyltransferase family. IspD subfamily.

The enzyme catalyses 2-C-methyl-D-erythritol 4-phosphate + CTP + H(+) = 4-CDP-2-C-methyl-D-erythritol + diphosphate. It functions in the pathway isoprenoid biosynthesis; isopentenyl diphosphate biosynthesis via DXP pathway; isopentenyl diphosphate from 1-deoxy-D-xylulose 5-phosphate: step 2/6. In terms of biological role, catalyzes the formation of 4-diphosphocytidyl-2-C-methyl-D-erythritol from CTP and 2-C-methyl-D-erythritol 4-phosphate (MEP). The protein is 2-C-methyl-D-erythritol 4-phosphate cytidylyltransferase of Burkholderia multivorans (strain ATCC 17616 / 249).